The sequence spans 190 residues: Protein GrpE (190 aa).

Residues 1-11 (MSNQDEPQNSP) are compositionally biased toward polar residues. The tract at residues 1–36 (MSNQDEPQNSPEEFAEDQQADVALEEASSDSSETAA) is disordered. Residues 13-28 (EFAEDQQADVALEEAS) are compositionally biased toward acidic residues.

This sequence belongs to the GrpE family. In terms of assembly, homodimer.

The protein localises to the cytoplasm. Its function is as follows. Participates actively in the response to hyperosmotic and heat shock by preventing the aggregation of stress-denatured proteins, in association with DnaK and GrpE. It is the nucleotide exchange factor for DnaK and may function as a thermosensor. Unfolded proteins bind initially to DnaJ; upon interaction with the DnaJ-bound protein, DnaK hydrolyzes its bound ATP, resulting in the formation of a stable complex. GrpE releases ADP from DnaK; ATP binding to DnaK triggers the release of the substrate protein, thus completing the reaction cycle. Several rounds of ATP-dependent interactions between DnaJ, DnaK and GrpE are required for fully efficient folding. In Teredinibacter turnerae (strain ATCC 39867 / T7901), this protein is Protein GrpE.